Reading from the N-terminus, the 385-residue chain is Protein pelota homolog (385 aa).

Lys-162 is covalently cross-linked (Glycyl lysine isopeptide (Lys-Gly) (interchain with G-Cter in SUMO2)). Phosphoserine is present on residues Ser-374, Ser-380, Ser-381, and Ser-382.

It belongs to the eukaryotic release factor 1 family. Pelota subfamily. In terms of assembly, component of the Pelota-HBS1L complex, also named Dom34-Hbs1 complex, composed of PELO and HBS1L. Interacts with PINK1. Interacts with ABCE1. Interacts with CNOT4. A divalent metal cation is required as a cofactor. Ubiquitously expressed.

The protein resides in the cytoplasm. In terms of biological role, component of the Pelota-HBS1L complex, a complex that recognizes stalled ribosomes and triggers the No-Go Decay (NGD) pathway. In the Pelota-HBS1L complex, PELO recognizes ribosomes stalled at the 3' end of an mRNA and engages stalled ribosomes by destabilizing mRNA in the mRNA channel. Following mRNA extraction from stalled ribosomes by the SKI complex, the Pelota-HBS1L complex promotes recruitment of ABCE1, which drives the disassembly of stalled ribosomes, followed by degradation of damaged mRNAs as part of the NGD pathway. As part of the PINK1-regulated signaling, upon mitochondrial damage is recruited to the ribosome/mRNA-ribonucleoprotein complex associated to mitochondrial outer membrane thereby enabling the recruitment of autophagy receptors and induction of mitophagy. The sequence is that of Protein pelota homolog from Mus musculus (Mouse).